We begin with the raw amino-acid sequence, 208 residues long: 3-demethoxyubiquinol 3-hydroxylase (208 aa).

Fe cation is bound by residues glutamate 57, glutamate 87, histidine 90, glutamate 139, glutamate 171, and histidine 174.

The protein belongs to the COQ7 family. Fe cation is required as a cofactor.

It localises to the cell membrane. The catalysed reaction is a 5-methoxy-2-methyl-3-(all-trans-polyprenyl)benzene-1,4-diol + AH2 + O2 = a 3-demethylubiquinol + A + H2O. Its pathway is cofactor biosynthesis; ubiquinone biosynthesis. In terms of biological role, catalyzes the hydroxylation of 2-nonaprenyl-3-methyl-6-methoxy-1,4-benzoquinol during ubiquinone biosynthesis. This Janthinobacterium sp. (strain Marseille) (Minibacterium massiliensis) protein is 3-demethoxyubiquinol 3-hydroxylase.